The chain runs to 363 residues: Probable protein phosphatase 2C member 13, mitochondrial (363 aa).

A mitochondrion-targeting transit peptide spans 1-59; that stretch reads MVCFASLRRALPLLLRATTTTTPRFLLPRALSGGVGGGAAVDARALLRGHSGWRGLRVA. A PPM-type phosphatase domain is found at 111–357; it reads KCGYSSFRGK…DNITCIVVQF (247 aa). 4 residues coordinate Mn(2+): D147, G148, D309, and D348.

Belongs to the PP2C family. Requires Mg(2+) as cofactor. Mn(2+) is required as a cofactor. As to expression, highly expressed in mature pollen grains.

The protein resides in the mitochondrion. The enzyme catalyses O-phospho-L-seryl-[protein] + H2O = L-seryl-[protein] + phosphate. The catalysed reaction is O-phospho-L-threonyl-[protein] + H2O = L-threonyl-[protein] + phosphate. Probable protein phosphatase that may play a role as a mitochondrial signal transduction mediator in pollen germination. May function in retrograde signaling from the mitochondria to the nucleus. May be a downstream factor of cytoplasmic male sterility (CMS). CMS is caused by genetic incompatibility between nuclei and mitochondria within male reproductive organs. The chain is Probable protein phosphatase 2C member 13, mitochondrial from Oryza sativa subsp. japonica (Rice).